The following is a 118-amino-acid chain: MKKELLEVFDNQFPDRDYTIEIVNPEFTSVCPKTGLPDFGTITLRYVPDKVCIELKSLKYYYLEFRNAGIFYENITNTILDHMISALHPRTLTVTTEWKARGGITETVTASYSSADKA.

Cys31 acts as the Thioimide intermediate in catalysis. The Proton donor role is filled by Asp38. Residues 53–55 and 72–73 each bind substrate; these read IEL and YE.

It belongs to the GTP cyclohydrolase I family. QueF type 1 subfamily.

It is found in the cytoplasm. The catalysed reaction is 7-aminomethyl-7-carbaguanine + 2 NADP(+) = 7-cyano-7-deazaguanine + 2 NADPH + 3 H(+). The protein operates within tRNA modification; tRNA-queuosine biosynthesis. Its function is as follows. Catalyzes the NADPH-dependent reduction of 7-cyano-7-deazaguanine (preQ0) to 7-aminomethyl-7-deazaguanine (preQ1). This is NADPH-dependent 7-cyano-7-deazaguanine reductase from Prosthecochloris aestuarii (strain DSM 271 / SK 413).